Consider the following 347-residue polypeptide: DnaJ protein ERDJ3B (347 aa).

The signal sequence occupies residues M1–G23. The J domain occupies S25–G90.

As to quaternary structure, interacts with BIP1.

It localises to the endoplasmic reticulum. In terms of biological role, may play a role in protein folding in the endoplasmic reticulum. The chain is DnaJ protein ERDJ3B from Oryza sativa subsp. japonica (Rice).